The primary structure comprises 440 residues: Xylose isomerase (440 aa).

Active-site residues include His-100 and Asp-103. Glu-231, Glu-267, His-270, Asp-295, Asp-306, Asp-308, and Asp-338 together coordinate Mg(2+).

The protein belongs to the xylose isomerase family. Homotetramer. Requires Mg(2+) as cofactor.

Its subcellular location is the cytoplasm. The catalysed reaction is alpha-D-xylose = alpha-D-xylulofuranose. This chain is Xylose isomerase, found in Paraburkholderia xenovorans (strain LB400).